Here is a 493-residue protein sequence, read N- to C-terminus: Probable malate:quinone oxidoreductase (493 aa).

This sequence belongs to the MQO family. Requires FAD as cofactor.

The catalysed reaction is (S)-malate + a quinone = a quinol + oxaloacetate. Its pathway is carbohydrate metabolism; tricarboxylic acid cycle; oxaloacetate from (S)-malate (quinone route): step 1/1. In Lysinibacillus sphaericus (strain C3-41), this protein is Probable malate:quinone oxidoreductase.